Reading from the N-terminus, the 886-residue chain is cytokinesis protein 3 (886 aa).

An SH3 domain is found at 6-67 (QLPCMVRALY…PSNFVHCLDI (62 aa)). The span at 72–88 (PGSSMSRTSASSFRYSS) shows a compositional bias: low complexity. The disordered stretch occupies residues 72-189 (PGSSMSRTSA…DLSRSTPSPL (118 aa)). The span at 89 to 104 (PQKSSIDTPITSSDQG) shows a compositional bias: polar residues. Residues 135 to 154 (LNSLGSSLSLKKSVSRPPSS) show a composition bias toward low complexity. The span at 155–188 (MSRTNLDVSSRWDNTADNDSQIDAQDLSRSTPSP) shows a compositional bias: polar residues. Serine 213 bears the Phosphoserine mark. Disordered regions lie at residues 219–290 (TKST…SPSD) and 358–393 (RRGS…SPHT). The span at 253–264 (DNSSKPRTSLQP) shows a compositional bias: polar residues.

The protein belongs to the CYK3 family.

The protein resides in the cell tip. Functionally, involved in cytokinesis. The protein is cytokinesis protein 3 (cyk3) of Schizosaccharomyces pombe (strain 972 / ATCC 24843) (Fission yeast).